Consider the following 173-residue polypeptide: MDITIQHPWFKRALGPLIPSRLFDQFFGEGLFEYDLLPLFSSTISPYYRQSLFRTVLESGISEVRSDRDKFTIFLDVKHFSPEDLSVKVIEDFVEIHGKHNERQDDHGYISREFHRRYRLPSNVDQAAITCSLSADGMLTFAAPKVQSNTDPSHNERPIPVSREEKPTSAPPS.

The residue at position 1 (M1) is an N-acetylmethionine. One can recognise a sHSP domain in the interval 52-162 (LFRTVLESGI…SHNERPIPVS (111 aa)). 4 residues coordinate Zn(2+): H100, E102, H107, and H154. The interval 144–173 (PKVQSNTDPSHNERPIPVSREEKPTSAPPS) is disordered. Basic and acidic residues predominate over residues 153–167 (SHNERPIPVSREEKP). The O-linked (GlcNAc) serine glycan is linked to S162.

This sequence belongs to the small heat shock protein (HSP20) family. Heteropolymer composed of three CRYAA and one CRYAB subunits. Inter-subunit bridging via zinc ions enhances stability, which is crucial as there is no protein turn over in the lens. Can also form homodimers and homotetramers (dimers of dimers) which serve as the building blocks of homooligomers. Within homooligomers, the zinc-binding motif is created from residues of 3 different molecules. His-100 and Glu-102 from one molecule are ligands of the zinc ion, and His-107 and His-154 residues from additional molecules complete the site with tetrahedral coordination geometry.

It localises to the cytoplasm. The protein localises to the nucleus. Functionally, contributes to the transparency and refractive index of the lens. May act as a chaperone, preventing aggregation of various proteins under a wide range of stress conditions. The polypeptide is Alpha-crystallin A chain (CRYAA) (Tupinambis teguixin (Golden tegu)).